Reading from the N-terminus, the 948-residue chain is Isoleucine--tRNA ligase (948 aa).

Positions 58–68 (PYANGDIHIGH) match the 'HIGH' region motif. Residue E566 participates in L-isoleucyl-5'-AMP binding. A 'KMSKS' region motif is present at residues 607 to 611 (KMSKS). Position 610 (K610) interacts with ATP. Residues C911, C914, C931, and C934 each contribute to the Zn(2+) site.

This sequence belongs to the class-I aminoacyl-tRNA synthetase family. IleS type 1 subfamily. Monomer. The cofactor is Zn(2+).

It is found in the cytoplasm. It carries out the reaction tRNA(Ile) + L-isoleucine + ATP = L-isoleucyl-tRNA(Ile) + AMP + diphosphate. Functionally, catalyzes the attachment of isoleucine to tRNA(Ile). As IleRS can inadvertently accommodate and process structurally similar amino acids such as valine, to avoid such errors it has two additional distinct tRNA(Ile)-dependent editing activities. One activity is designated as 'pretransfer' editing and involves the hydrolysis of activated Val-AMP. The other activity is designated 'posttransfer' editing and involves deacylation of mischarged Val-tRNA(Ile). The chain is Isoleucine--tRNA ligase from Vibrio vulnificus (strain YJ016).